Here is a 198-residue protein sequence, read N- to C-terminus: Phosphoheptose isomerase (198 aa).

Positions 34–196 constitute an SIS domain; the sequence is IVEALIRGNK…DDSLFPADHG (163 aa). Residue 49–51 participates in substrate binding; sequence NGG. Zn(2+)-binding residues include His58 and Asn62. Substrate is bound by residues Asn62, 91-92, 117-119, Ser122, and Gln172; these read ND and STS. Residues Gln172 and His180 each coordinate Zn(2+).

This sequence belongs to the SIS family. GmhA subfamily. In terms of assembly, homotetramer. The cofactor is Zn(2+).

It is found in the cytoplasm. It catalyses the reaction 2 D-sedoheptulose 7-phosphate = D-glycero-alpha-D-manno-heptose 7-phosphate + D-glycero-beta-D-manno-heptose 7-phosphate. It participates in carbohydrate biosynthesis; D-glycero-D-manno-heptose 7-phosphate biosynthesis; D-glycero-alpha-D-manno-heptose 7-phosphate and D-glycero-beta-D-manno-heptose 7-phosphate from sedoheptulose 7-phosphate: step 1/1. Catalyzes the isomerization of sedoheptulose 7-phosphate in D-glycero-D-manno-heptose 7-phosphate. The chain is Phosphoheptose isomerase from Alteromonas mediterranea (strain DSM 17117 / CIP 110805 / LMG 28347 / Deep ecotype).